The primary structure comprises 363 residues: Early boundary activity protein 1 (363 aa).

The span at 155–168 shows a compositional bias: basic and acidic residues; it reads MDQEPEHKQSHEQD. A disordered region spans residues 155-242; it reads MDQEPEHKQS…NAKRRCPGFE (88 aa). Over residues 198–209 the composition is skewed to acidic residues; that stretch reads EDLGLDDDDEDY. One can recognise a BEN domain in the interval 255–354; it reads GPNGTEVSRI…TKCADENKML (100 aa).

The heterotrimeric Elba complex consists of Elba1, Elba2 and Elba3.

The protein localises to the nucleus. The heterotrimeric Elba complex is required for chromatin domain boundary function during early embryogenesis. It binds to a 8-bp sequence 5'-CCAATAAG-3' in the Fab-7 insulator or boundary element in the bithorax complex and contributes to its insulator or boundary activity. Elba1 may act as a transcriptional repressor and binds the palindromic sequence 5'-CCAATTGG-3' to mediate transcriptional repression. The protein is Early boundary activity protein 1 of Drosophila melanogaster (Fruit fly).